A 643-amino-acid polypeptide reads, in one-letter code: Threonine--tRNA ligase (643 aa).

The 61-residue stretch at 1 to 61 folds into the TGS domain; it reads MPIITLPDGS…EQDATLEIIT (61 aa). A catalytic region spans residues 243–534; that stretch reads DHRKIGKALD…ITEEYAGFFP (292 aa). Residues Cys-334, His-385, and His-511 each contribute to the Zn(2+) site.

Belongs to the class-II aminoacyl-tRNA synthetase family. In terms of assembly, homodimer. Requires Zn(2+) as cofactor.

It localises to the cytoplasm. The enzyme catalyses tRNA(Thr) + L-threonine + ATP = L-threonyl-tRNA(Thr) + AMP + diphosphate + H(+). Its function is as follows. Catalyzes the attachment of threonine to tRNA(Thr) in a two-step reaction: L-threonine is first activated by ATP to form Thr-AMP and then transferred to the acceptor end of tRNA(Thr). Also edits incorrectly charged L-seryl-tRNA(Thr). The chain is Threonine--tRNA ligase from Haemophilus influenzae (strain PittGG).